A 2624-amino-acid chain; its full sequence is Transcription factor TFIIIB component B'' homolog (2624 aa).

Positions 1–142 are disordered; that stretch reads MFRRARLSVK…TKEKQPCSDR (142 aa). An interaction with ZBTB43 region spans residues 1–299; the sequence is MFRRARLSVK…TYSSFRKNYY (299 aa). Basic and acidic residues predominate over residues 63 to 77; the sequence is PQEKAPRSSTEKTGG. The segment covering 99-119 has biased composition (low complexity); sequence SSTSSLVKSSVSVPSESHPLS. Polar residues predominate over residues 120–132; it reads TINQEAPQPTATS. Positions 133 to 142 are enriched in basic and acidic residues; sequence TKEKQPCSDR. Positions 144 to 177 form a coiled coil; it reads RIYKAQKLREMLKEELRKEKKQWKNKYAINESQR. Residues 193-241 form a disordered region; sequence LPDNNPMTSSLEQEKKTEKPSTPVQTREQEGKSTPNAEDNEMEEETDDG. Residues 212–229 show a composition bias toward polar residues; it reads PSTPVQTREQEGKSTPNA. Residues 230-240 are compositionally biased toward acidic residues; the sequence is EDNEMEEETDD. The 51-residue stretch at 295 to 345 folds into the Myb-like domain; it reads RKNYYSKPWSNKETDMFFLAISMVGTDFSMIGQLFPHRARIEIKNKFKREE. The tract at residues 355–470 is required for phosphorylation by CSNK2A1; sequence AFQEKRPFDF…QKKRRRKKQD (116 aa). Disordered regions lie at residues 379 to 449, 544 to 567, 606 to 663, and 729 to 759; these read EKRK…SRED, LSLSNQQDATSVATESSESSTSDL, ENVK…MNTL, and EEIGANVEKNENESCADRDTPQHMEDQSRKD. A compositionally biased stretch (basic residues) spans 397–407; it reads TKPRKNVKVKK. The span at 552–565 shows a compositional bias: low complexity; sequence ATSVATESSESSTS. 2 stretches are compositionally biased toward basic and acidic residues: residues 637–663 and 736–759; these read TESESKNSHSKTSVEKNHVEKDKMNTL and EKNENESCADRDTPQHMEDQSRKD. A 1; approximate repeat occupies 823 to 877; the sequence is GRREISSKEEVLEKILVSGEMAAALRETVRLDTSPKEMVPAEINTKEMQSDLKET. Residues 823 to 1327 are 9 X 55 AA repeats of G-R-R-X-I-S-P-X-E-N-G-X-E-E-V-K-P-X-X-E-M-E-T-D-L-K-X-T-G-R-E-X-X-X-R-E-K-T-X-E-X-X-D-A-X-E-E-I-D-X-D-L-E-E-T; that stretch reads GRREISSKEE…PRENELEETS (505 aa). Tandem repeats lie at residues 878-932, 933-987, 988-1040, 1041-1094, 1095-1148, and 1149-1203. Thr-915 bears the Phosphothreonine mark. Basic and acidic residues-rich tracts occupy residues 930–957 and 979–1006; these read EEAGRREISPQKNGPEEVKPLGEVETDL and EIDKNLEETGRRKISPRENGPEEVKPVD. The disordered stretch occupies residues 930–1222; that stretch reads EEAGRREISP…GPEEVKPVGK (293 aa). Acidic residues predominate over residues 1030–1041; that stretch reads DATEEIDLEETE. Positions 1052–1079 are enriched in basic and acidic residues; it reads EEVKPLGEMETDLKATGRDSFPRGKTPE. A coiled-coil region spans residues 1078–1103; sequence PEVIDAIEEIEIDLEETEREISPQEN. The segment covering 1082-1095 has biased composition (acidic residues); that stretch reads DAIEEIEIDLEETE. Residues 1120–1133 are compositionally biased toward basic and acidic residues; sequence ATGREISPREKTPE. Positions 1136 to 1145 are enriched in acidic residues; it reads DATEEIDKDL. Positions 1161 to 1190 are enriched in basic and acidic residues; sequence EEVKPVDEMETDLKTTGREGSSREKTREVI. Positions 1194–1204 are enriched in acidic residues; that stretch reads EVIETDLEETE. The 8; approximate repeat unit spans residues 1204 to 1257; the sequence is EREISPQENGPEEVKPVGKMETDLKEIREEISQREKVLAEFSAIREKEIDLKET. The stretch at 1223–1284 forms a coiled coil; sequence METDLKEIRE…VEEMEADLKE (62 aa). Residues 1258-1327 form a 9; approximate repeat; that stretch reads GKRDIPIMEK…PRENELEETS (70 aa). Residues 1306 to 1321 are compositionally biased toward basic and acidic residues; sequence AELKQTGKTDISPREN. Disordered stretches follow at residues 1306-1348, 1365-1440, 1519-1543, 1684-1722, 1819-1863, 2130-2164, 2181-2200, 2207-2241, 2444-2501, and 2519-2566; these read AELK…SAVP, TPVE…RFKR, TERNLSPSNSCEPKEESQSAPVQKN, KAKPNLGRAHSKKEEPVLEKVTTDQSKEGKPEDHLLQKG, STSE…ASKA, GAEMETQRETEKNASKATELENKNLGPVTTAENKD, SEVNLTERNENQEESSQEVH, VASSETGPCTLGLDRGLGENSVEEPQIKDSKGDSV, FQSR…SRPG, and SDEP…PSPS. Over residues 1326 to 1344 the composition is skewed to polar residues; it reads TSTSRQTDTHLMQSGSNDF. Residues 1366–1378 show a composition bias toward basic and acidic residues; sequence PVEEKRNSEKEVS. 3 stretches are compositionally biased toward polar residues: residues 1379–1390, 1411–1421, and 1519–1529; these read SHFSHFKISSQT, SDINLSKSLPQ, and TERNLSPSNSC. Residues 1695–1719 are compositionally biased toward basic and acidic residues; it reads KKEEPVLEKVTTDQSKEGKPEDHLL. Basic residues predominate over residues 1844–1853; the sequence is RGSKRVRGKT. The segment covering 2131-2151 has biased composition (basic and acidic residues); the sequence is AEMETQRETEKNASKATELEN. A compositionally biased stretch (basic and acidic residues) spans 2470 to 2479; sequence VSDKEERTDA. The segment covering 2488–2498 has biased composition (low complexity); that stretch reads SRTSSSKASLS. The span at 2526–2544 shows a compositional bias: basic residues; it reads HSKKRLKPLIPGLRKKLKR.

In terms of assembly, component of TFIIIB complex. The TFIIIB complex has two activities, alpha and beta. The TFIIIB-alpha and TFIIIB-beta activities are required for transcription of genes with TFIIIC-bound internal promoters and PSE transcription factor-bound external promoters, respectively. The TFIIIB-alpha activity complex is composed of TBP, BDP1, and a complex containing both BRF2 and at least four stably associated proteins; YY1 facilitates the formation of TFIIIB-alpha activity complex. The TFIIIB-beta activity complex is composed of TBP, BDP1, and BRF1. Interacts with BRF1; this interaction diminishes during mitosis resulting in the release of BDP1 from chromosomal templates. Component of TFIIIC complex. The TFIIIC complex has two activities, C1 and C2. The TFIIIC2 activity complex is only required for transcription of the 'classical' pol III genes whereas the TFIIIC1 activity complex is required for transcription of all pol III genes. The TFIIIC1 activity complex is composed at least of BDP1. Interacts with ZBTB43. Post-translationally, phosphorylated by CSNK2A1 during mitosis, resulting in its release from chromatin and suppression of polymerase III transcription. Isoform 2 is highly expressed in cerebellum.

It localises to the nucleus. Its function is as follows. General activator of RNA polymerase III transcription. Requires for transcription from all three types of polymerase III promoters. Requires for transcription of genes with internal promoter elements and with promoter elements upstream of the initiation site. This chain is Transcription factor TFIIIB component B'' homolog (BDP1), found in Homo sapiens (Human).